Reading from the N-terminus, the 372-residue chain is N-methyl-L-tryptophan oxidase (372 aa).

4–34 (DLIIIGSGSVGAAAGYYATRAGLNVLMTDAH) is a binding site for FAD. Cys308 carries the S-8alpha-FAD cysteine modification.

This sequence belongs to the MSOX/MTOX family. MTOX subfamily. In terms of assembly, monomer. The cofactor is FAD.

The catalysed reaction is N(alpha)-methyl-L-tryptophan + O2 + H2O = L-tryptophan + formaldehyde + H2O2. Catalyzes the oxidative demethylation of N-methyl-L-tryptophan. In Escherichia coli O127:H6 (strain E2348/69 / EPEC), this protein is N-methyl-L-tryptophan oxidase.